We begin with the raw amino-acid sequence, 386 residues long: GTPase Obg (386 aa).

Residues 4-162 form the Obg domain; it reads SNFVDYVKIY…MTVILELKLL (159 aa). Positions 18–45 are disordered; that stretch reads KGGRGSTHMRREKYTPNGGPDGGDGGRG. Residues 36–45 are compositionally biased toward gly residues; that stretch reads GPDGGDGGRG. An OBG-type G domain is found at 163–329; that stretch reads ADVGLVGFPN…LKDILWTELN (167 aa). GTP-binding positions include 169–176, 194–198, 216–219, 283–286, and 310–312; these read GFPNAGKS, FTTLE, DIPG, TKSD, and SSV. Ser176 and Thr196 together coordinate Mg(2+). The interval 351 to 386 is disordered; that stretch reads ELKDMGEDEELDYEYEDDGDEDDLDYEYEEEDWEDK. Acidic residues predominate over residues 356 to 386; that stretch reads GEDEELDYEYEDDGDEDDLDYEYEEEDWEDK.

The protein belongs to the TRAFAC class OBG-HflX-like GTPase superfamily. OBG GTPase family. As to quaternary structure, monomer. Mg(2+) serves as cofactor.

The protein localises to the cytoplasm. In terms of biological role, an essential GTPase which binds GTP, GDP and possibly (p)ppGpp with moderate affinity, with high nucleotide exchange rates and a fairly low GTP hydrolysis rate. Plays a role in control of the cell cycle, stress response, ribosome biogenesis and in those bacteria that undergo differentiation, in morphogenesis control. The chain is GTPase Obg from Bacteroides fragilis (strain YCH46).